Reading from the N-terminus, the 247-residue chain is Ubiquinone biosynthesis O-methyltransferase (247 aa).

S-adenosyl-L-methionine contacts are provided by R39, G70, D91, and M134.

The protein belongs to the methyltransferase superfamily. UbiG/COQ3 family.

The catalysed reaction is a 3-demethylubiquinol + S-adenosyl-L-methionine = a ubiquinol + S-adenosyl-L-homocysteine + H(+). It carries out the reaction a 3-(all-trans-polyprenyl)benzene-1,2-diol + S-adenosyl-L-methionine = a 2-methoxy-6-(all-trans-polyprenyl)phenol + S-adenosyl-L-homocysteine + H(+). Its pathway is cofactor biosynthesis; ubiquinone biosynthesis. In terms of biological role, O-methyltransferase that catalyzes the 2 O-methylation steps in the ubiquinone biosynthetic pathway. In Cereibacter sphaeroides (strain ATCC 17029 / ATH 2.4.9) (Rhodobacter sphaeroides), this protein is Ubiquinone biosynthesis O-methyltransferase.